The primary structure comprises 525 residues: MSAATTVLAQGAAQKITPPSIEYSSLSPMLILFGVALAGVLVDAFAPPKARRVLQPLLAGAGFIGAFVAVVLLHAHRQVLAAGAVAIDGPTLFLQGTILVFALLSVLLVAERRLDSSGGALVASAAVVPGSRGSTAQRTSPDVQTEAYPLMVFSVSGMLLFVASNNLLVMFVALEILSLPLYLLCGLARRRRLLSQEAAMKYFLLGAFSSAFFLYGVAFAYGYAGSVELGRVADAVGTVGQNDTYLYLSLALLGVGLFFKIGAAPFHSWTPDVYQGAPTPITAFMAAGTKVAAFGALLRVFYVAFGGMRWDWRPVIWAVAILTMVVGAVLALTQRDIKRMLAYSAVAHAGFLLVGMAGSNIDGLRGAMFYLVTYGFTTIAAFAVVSLVRTGDGEASDLSQWQGLGRTSPLLAGTFAFLLLALAGIPLTSGFTGKFAVFQAAIAGDATPLVVVALVCSAIAAFFYVRVIVLMFFSEPLADGPVVVTRPTLTFATVGIGALMTLLLGVAPQPLLDLATTAATSGFVR.

Helical transmembrane passes span 26–46 (LSPM…DAFA), 53–73 (VLQP…VVLL), 90–110 (PTLF…LLVA), 143–163 (VQTE…LFVA), 167–187 (LLVM…LCGL), 202–222 (YFLL…FAYG), 246–266 (LYLS…AAPF), 278–298 (PTPI…GALL), 314–334 (PVIW…ALTQ), 341–361 (LAYS…GSNI), 368–388 (MFYL…VSLV), 411–431 (LAGT…TSGF), 449–469 (LVVV…RVIV), and 487–507 (PTLT…LGVA).

This sequence belongs to the complex I subunit 2 family. NDH-1 is composed of 14 different subunits. Subunits NuoA, H, J, K, L, M, N constitute the membrane sector of the complex.

The protein localises to the cell membrane. The catalysed reaction is a quinone + NADH + 5 H(+)(in) = a quinol + NAD(+) + 4 H(+)(out). In terms of biological role, NDH-1 shuttles electrons from NADH, via FMN and iron-sulfur (Fe-S) centers, to quinones in the respiratory chain. The immediate electron acceptor for the enzyme in this species is believed to be a menaquinone. Couples the redox reaction to proton translocation (for every two electrons transferred, four hydrogen ions are translocated across the cytoplasmic membrane), and thus conserves the redox energy in a proton gradient. This chain is NADH-quinone oxidoreductase subunit N, found in Parafrankia sp. (strain EAN1pec).